The primary structure comprises 255 residues: MKNQIVYEFPLNERMRLFMRLEQLFRQARHFNQGGSVWDCRAVVATLNEIVALLARNDIKSELLKELDRLGGGLGKMQGNQHIDQAALATVLGQIDAAAQRIYGHSGRIGYQVMENELFKSVAQRTAIPGGTCSFDLPGYHFWLERDVERRRNEATEWLDCFHPVQEGIALILGLLRDSAAGIWETAHGGFFQKNLDHAAAVQLLRVAVPIELPYFAEISGSKHRFTVRFLTGLSNERPVQCSEDVPFQLTVCLL.

The protein belongs to the ZapD family. As to quaternary structure, interacts with FtsZ.

The protein localises to the cytoplasm. Its function is as follows. Cell division factor that enhances FtsZ-ring assembly. Directly interacts with FtsZ and promotes bundling of FtsZ protofilaments, with a reduction in FtsZ GTPase activity. The polypeptide is Cell division protein ZapD (Methylococcus capsulatus (strain ATCC 33009 / NCIMB 11132 / Bath)).